A 211-amino-acid polypeptide reads, in one-letter code: GTP-binding protein ypt5 (211 aa).

21 to 28 (GDSAVGKS) is a binding site for GTP. The Effector region motif lies at 43-51 (RESTIGAAF). GTP contacts are provided by residues 70–74 (DTAGQ) and 128–131 (NKLD). 2 S-geranylgeranyl cysteine lipidation sites follow: Cys209 and Cys211. Cys211 carries the post-translational modification Cysteine methyl ester.

It belongs to the small GTPase superfamily. Rab family.

The protein resides in the cell membrane. Protein transport. Probably involved in vesicular traffic. This is GTP-binding protein ypt5 (ypt5) from Schizosaccharomyces pombe (strain 972 / ATCC 24843) (Fission yeast).